Here is a 763-residue protein sequence, read N- to C-terminus: Phosphoglycerol transferase I (763 aa).

A run of 4 helical transmembrane segments spans residues 1 to 21, 26 to 46, 77 to 97, and 108 to 128; these read MSELLSVALFLASVLIYAWKA, WWFAATLTVLGLFVILNITLY, ILPGIGIALALVAVFGALGWV, and VGYSLLALLLALGSVDASPAF.

Belongs to the OpgB family.

It localises to the cell inner membrane. The enzyme catalyses a phosphatidylglycerol + a membrane-derived-oligosaccharide D-glucose = a 1,2-diacyl-sn-glycerol + a membrane-derived-oligosaccharide 6-(glycerophospho)-D-glucose.. The protein operates within glycan metabolism; osmoregulated periplasmic glucan (OPG) biosynthesis. Transfers a phosphoglycerol residue from phosphatidylglycerol to the membrane-bound nascent glucan backbones. The polypeptide is Phosphoglycerol transferase I (Salmonella schwarzengrund (strain CVM19633)).